We begin with the raw amino-acid sequence, 20 residues long: Hemocyanin subunit Ia (20 aa).

The tract at residues 1–20 (ADXQPGDSTDKLLAQKQDDV) is disordered.

It belongs to the tyrosinase family. Hemocyanin subfamily. As to quaternary structure, composed of 3 major subunits (IB, II and III) and 1 minor subunit (IA) which form homohexamers and heterohexamers. May also form larger structures. Hemolymph.

Its subcellular location is the secreted. The protein resides in the extracellular space. In terms of biological role, hemocyanins are copper-containing oxygen carriers occurring freely dissolved in the hemolymph of many mollusks and arthropods. In Panulirus japonicus (Japanese spiny lobster), this protein is Hemocyanin subunit Ia.